Here is a 274-residue protein sequence, read N- to C-terminus: Large ribosomal subunit protein uL2 (274 aa).

A disordered region spans residues 224–274 (VAMNPVDHPHGGGEGRTSGGRHPVTPWGIPTKGYKTRKNKRSNKLIVQKRK). The span at 257–274 (YKTRKNKRSNKLIVQKRK) shows a compositional bias: basic residues.

It belongs to the universal ribosomal protein uL2 family. Part of the 50S ribosomal subunit. Forms a bridge to the 30S subunit in the 70S ribosome.

One of the primary rRNA binding proteins. Required for association of the 30S and 50S subunits to form the 70S ribosome, for tRNA binding and peptide bond formation. It has been suggested to have peptidyltransferase activity; this is somewhat controversial. Makes several contacts with the 16S rRNA in the 70S ribosome. This is Large ribosomal subunit protein uL2 from Francisella philomiragia subsp. philomiragia (strain ATCC 25017 / CCUG 19701 / FSC 153 / O#319-036).